The chain runs to 260 residues: Tropinone reductase homolog At2g29330 (260 aa).

NADP(+) is bound at residue 13–37; it reads LVTGGASGIGHAIVEELAGFGAKIH. Position 146 (Ser146) interacts with substrate. Tyr159 (proton acceptor) is an active-site residue.

Belongs to the short-chain dehydrogenases/reductases (SDR) family. SDR65C subfamily.

Functionally, reductase active only on small flexible lipophilic carbonyls. No activity with cyclic monoterpenes, tropinone, nitrogen-containing tropinone analogs, tropine or pseudotropine as substrate. This is Tropinone reductase homolog At2g29330 from Arabidopsis thaliana (Mouse-ear cress).